A 421-amino-acid polypeptide reads, in one-letter code: Lipid II:glycine glycyltransferase (421 aa).

It belongs to the FemABX family. As to quaternary structure, monomer.

Its subcellular location is the cytoplasm. It carries out the reaction beta-D-GlcNAc-(1-&gt;4)-Mur2Ac(oyl-L-Ala-D-isoglutaminyl-L-Lys-D-Ala-D-Ala)-di-trans,octa-cis-undecaprenyl diphosphate + glycyl-tRNA(Gly) = beta-D-GlcNAc-(1-&gt;4)-Mur2Ac(oyl-L-Ala-D-isoglutaminyl-L-Lys-(N(6)-Gly)-D-Ala-D-Ala)-di-trans,octa-cis-undecaprenyl diphosphate + tRNA(Gly) + H(+). Its function is as follows. Catalyzes the incorporation of the first glycine of the pentaglycine interpeptide bridge, which is characteristic of the S.aureus peptidoglycan. This glycine is added to the epsilon-amino group of the L-lysine of the membrane-bound lipid II intermediate (GlcNAc-(beta-1,4)-N-acetylmuramic acid(-L-Ala-D-iGln-L-Lys-D-Ala-D-Ala)-pyrophosphoryl-undecaprenol), using glycyl-tRNA(Gly) as donor, in a ribosome-independent mechanism. Involved in methicillin resistance. The sequence is that of Lipid II:glycine glycyltransferase (femX) from Staphylococcus aureus (strain MRSA252).